A 350-amino-acid polypeptide reads, in one-letter code: MRRRISAIIMTLFMVLVSCNSGGVAEDPKTVYLTSIANLGKGFLDVFVTFGDMVAGAFGIRADTKKSDIGKYFNDIEKTMTTVKKRLQDEVAKNGNYVKVKEVVDKFVADVLDKIAAGAKEAAKGATGDDKIRKCYFCWAWSQSADKDSVISLVKGIKTIVDAVLKDKGDAGATKTGEDKKDIGNLFINDAGKDGSKRENIAKAAASIGSVTGADILQAIIKSKENPNADSVNGIEKATDAAEIAIVPAVNKTEIKEDTAKKDAVIAAGIALRAMAKDGKFAAKNEEKSANAVNGAAASAVGKTLSTLIIAIRNTVDSGLKTINEALATVKQEDKSAEATNPAEATTSGQ.

An N-terminal signal peptide occupies residues Met1–Ser18. Cys19 is lipidated: N-palmitoyl cysteine. Cys19 is lipidated: S-diacylglycerol cysteine.

This sequence belongs to the variable large protein (Vlp) family. Delta subfamily.

Its subcellular location is the cell outer membrane. The Vlp and Vsp proteins are antigenically distinct proteins, only one vlp or vsp gene is transcriptionally active at any one time. Switching between these genes is a mechanism of host immune response evasion. The polypeptide is Variable large protein 4 (Borrelia hermsii).